Here is a 125-residue protein sequence, read N- to C-terminus: Holo-[acyl-carrier-protein] synthase (125 aa).

The Mg(2+) site is built by D8 and E57.

It belongs to the P-Pant transferase superfamily. AcpS family. The cofactor is Mg(2+).

Its subcellular location is the cytoplasm. It carries out the reaction apo-[ACP] + CoA = holo-[ACP] + adenosine 3',5'-bisphosphate + H(+). Its function is as follows. Transfers the 4'-phosphopantetheine moiety from coenzyme A to a Ser of acyl-carrier-protein. This Halothermothrix orenii (strain H 168 / OCM 544 / DSM 9562) protein is Holo-[acyl-carrier-protein] synthase.